The sequence spans 403 residues: Phosphomevalonate dehydratase large subunit (403 aa).

Residues Gly-48, Val-49, Ser-50, Asn-79, and Pro-80 each coordinate (R)-5-phosphomevalonate. Cys-119 contributes to the [4Fe-4S] cluster binding site. Positions 138 and 139 each coordinate (R)-5-phosphomevalonate. The [4Fe-4S] cluster site is built by Cys-301 and Cys-358. Lys-378 contacts (R)-5-phosphomevalonate.

It belongs to the AcnX type II large subunit family. As to quaternary structure, heterodimer composed of a large subunit (PMDh-L) and a small subunit (PMDh-S). Requires [4Fe-4S] cluster as cofactor.

The catalysed reaction is (R)-5-phosphomevalonate = (2E)-3-methyl-5-phosphooxypent-2-enoate + H2O. Its pathway is isoprenoid biosynthesis; isopentenyl diphosphate biosynthesis via mevalonate pathway. Functionally, component of a hydro-lyase that catalyzes the dehydration of mevalonate 5-phosphate (MVA5P) to form trans-anhydromevalonate 5-phosphate (tAHMP). Involved in the archaeal mevalonate (MVA) pathway, which provides fundamental precursors for isoprenoid biosynthesis, such as isopentenyl diphosphate (IPP) and dimethylallyl diphosphate (DMAPP). In Methanocaldococcus jannaschii (strain ATCC 43067 / DSM 2661 / JAL-1 / JCM 10045 / NBRC 100440) (Methanococcus jannaschii), this protein is Phosphomevalonate dehydratase large subunit.